We begin with the raw amino-acid sequence, 329 residues long: E3 ubiquitin-protein ligase SINA-like 4 (329 aa).

Positions 1–12 (MTKLGRRNDGGG) are enriched in basic and acidic residues. Residues 1–58 (MTKLGRRNDGGGKSHRSSTKRQRRTSVSVDDPSPGEEEEKTLVVLTDDSDSEEDDKPL) form a disordered region. Residues 13-24 (KSHRSSTKRQRR) are compositionally biased toward basic residues. Residues 86–122 (CPNCFDPLKKPIFQCNNGHLACFLCCIKLKKRCSFCK) form an RING-type; degenerate zinc finger. An SBD region spans residues 136 to 325 (VIKAGLVSCS…MEISIGDKND (190 aa)). The SIAH-type zinc-finger motif lies at 139 to 198 (AGLVSCSNAIYGCKQSTTYGNQLQSHEKVCVFAPCSCPIKDCNYIGFYKDLINHFRATHK). Residues cysteine 144, cysteine 151, histidine 164, cysteine 168, cysteine 175, cysteine 180, histidine 192, and histidine 197 each contribute to the Zn(2+) site.

Belongs to the SINA (Seven in absentia) family.

It catalyses the reaction S-ubiquitinyl-[E2 ubiquitin-conjugating enzyme]-L-cysteine + [acceptor protein]-L-lysine = [E2 ubiquitin-conjugating enzyme]-L-cysteine + N(6)-ubiquitinyl-[acceptor protein]-L-lysine.. Its pathway is protein modification; protein ubiquitination. E3 ubiquitin-protein ligase that mediates ubiquitination and subsequent proteasomal degradation of target proteins. E3 ubiquitin ligases accept ubiquitin from an E2 ubiquitin-conjugating enzyme in the form of a thioester and then directly transfers the ubiquitin to targeted substrates. It probably triggers the ubiquitin-mediated degradation of different substrates. The chain is E3 ubiquitin-protein ligase SINA-like 4 from Arabidopsis thaliana (Mouse-ear cress).